Reading from the N-terminus, the 384-residue chain is 1-deoxy-D-xylulose 5-phosphate reductoisomerase (384 aa).

Positions 10, 11, 12, 13, 38, and 120 each coordinate NADPH. A 1-deoxy-D-xylulose 5-phosphate-binding site is contributed by lysine 121. NADPH is bound at residue glutamate 122. Residue aspartate 146 coordinates Mn(2+). Residues serine 147, glutamate 148, serine 172, and histidine 195 each contribute to the 1-deoxy-D-xylulose 5-phosphate site. Position 148 (glutamate 148) interacts with Mn(2+). Glycine 201 provides a ligand contact to NADPH. Residues serine 208, asparagine 213, lysine 214, and glutamate 217 each coordinate 1-deoxy-D-xylulose 5-phosphate. Glutamate 217 serves as a coordination point for Mn(2+).

It belongs to the DXR family. It depends on Mg(2+) as a cofactor. Mn(2+) is required as a cofactor.

It carries out the reaction 2-C-methyl-D-erythritol 4-phosphate + NADP(+) = 1-deoxy-D-xylulose 5-phosphate + NADPH + H(+). It participates in isoprenoid biosynthesis; isopentenyl diphosphate biosynthesis via DXP pathway; isopentenyl diphosphate from 1-deoxy-D-xylulose 5-phosphate: step 1/6. In terms of biological role, catalyzes the NADPH-dependent rearrangement and reduction of 1-deoxy-D-xylulose-5-phosphate (DXP) to 2-C-methyl-D-erythritol 4-phosphate (MEP). The chain is 1-deoxy-D-xylulose 5-phosphate reductoisomerase from Protochlamydia amoebophila (strain UWE25).